Here is a 546-residue protein sequence, read N- to C-terminus: U3 small nucleolar RNA-associated protein 18 homolog (546 aa).

Disordered stretches follow at residues methionine 1–serine 55, serine 94–glycine 118, and asparagine 177–valine 205. Residues isoleucine 13–glutamate 23 are compositionally biased toward basic and acidic residues. The span at aspartate 24–aspartate 35 shows a compositional bias: acidic residues. Serine 33 is subject to Phosphoserine. Residues threonine 45–serine 55 show a composition bias toward basic and acidic residues. 2 stretches are compositionally biased toward acidic residues: residues aspartate 101–asparagine 117 and glutamate 193–valine 205. WD repeat units lie at residues proline 242–isoleucine 281, lysine 372–lysine 411, valine 413–arginine 454, and serine 509–asparagine 545. The DWD box signature appears at leucine 389–arginine 404.

The protein belongs to the WD repeat UTP18 family.

The protein resides in the nucleus. It localises to the nucleolus. Its function is as follows. Involved in nucleolar processing of pre-18S ribosomal RNA. This chain is U3 small nucleolar RNA-associated protein 18 homolog, found in Arabidopsis thaliana (Mouse-ear cress).